The chain runs to 167 residues: UPF0179 protein Pisl_0688 (167 aa).

Belongs to the UPF0179 family.

This Pyrobaculum islandicum (strain DSM 4184 / JCM 9189 / GEO3) protein is UPF0179 protein Pisl_0688.